The chain runs to 411 residues: Lissencephaly-1 homolog (411 aa).

Residues 9-41 enclose the LisH domain; that stretch reads QREELNQAIADYLGSNGYADSLETFRKEADLST. A coiled-coil region spans residues 56 to 83; it reads TSVIRLQKKVMDLEAKLTEAEKEVIEGA. 7 WD repeats span residues 106–147, 148–187, 191–230, 233–272, 275–334, 337–376, and 379–411; these read GHRA…RSLK, GHTD…ECVK, GHDH…CVKT, GHRE…CKVE, DHEH…CLLT, GHDN…CMKT, and AHQH…WECR.

Belongs to the WD repeat LIS1/nudF family.

The protein resides in the cytoplasm. It is found in the cytoskeleton. Its subcellular location is the microtubule organizing center. The protein localises to the centrosome. Functionally, positively regulates the activity of the minus-end directed microtubule motor protein dynein. May enhance dynein-mediated microtubule sliding by targeting dynein to the microtubule plus end. Required for several dynein- and microtubule-dependent processes. The sequence is that of Lissencephaly-1 homolog from Drosophila mojavensis (Fruit fly).